We begin with the raw amino-acid sequence, 137 residues long: ATP synthase epsilon chain, chloroplastic (137 aa).

The protein belongs to the ATPase epsilon chain family. As to quaternary structure, F-type ATPases have 2 components, CF(1) - the catalytic core - and CF(0) - the membrane proton channel. CF(1) has five subunits: alpha(3), beta(3), gamma(1), delta(1), epsilon(1). CF(0) has three main subunits: a, b and c.

Its subcellular location is the plastid. It localises to the chloroplast thylakoid membrane. In terms of biological role, produces ATP from ADP in the presence of a proton gradient across the membrane. This chain is ATP synthase epsilon chain, chloroplastic, found in Hordeum vulgare (Barley).